Reading from the N-terminus, the 163-residue chain is Xanthine-guanine phosphoribosyltransferase (163 aa).

5-phospho-alpha-D-ribose 1-diphosphate contacts are provided by residues 43 to 44 (RG) and 95 to 103 (DDLADTGGT). D96 is a Mg(2+) binding site. Residues D99 and I142 each contribute to the guanine site. Xanthine is bound by residues D99 and I142. GMP is bound by residues 99-103 (DTGGT) and 141-142 (WI).

This sequence belongs to the purine/pyrimidine phosphoribosyltransferase family. XGPT subfamily. Homotetramer. Mg(2+) is required as a cofactor.

The protein localises to the cell inner membrane. The enzyme catalyses GMP + diphosphate = guanine + 5-phospho-alpha-D-ribose 1-diphosphate. It catalyses the reaction XMP + diphosphate = xanthine + 5-phospho-alpha-D-ribose 1-diphosphate. It carries out the reaction IMP + diphosphate = hypoxanthine + 5-phospho-alpha-D-ribose 1-diphosphate. The protein operates within purine metabolism; GMP biosynthesis via salvage pathway; GMP from guanine: step 1/1. It functions in the pathway purine metabolism; XMP biosynthesis via salvage pathway; XMP from xanthine: step 1/1. Functionally, purine salvage pathway enzyme that catalyzes the transfer of the ribosyl-5-phosphate group from 5-phospho-alpha-D-ribose 1-diphosphate (PRPP) to the N9 position of the 6-oxopurines guanine and xanthine to form the corresponding ribonucleotides GMP (guanosine 5'-monophosphate) and XMP (xanthosine 5'-monophosphate), with the release of PPi. To a lesser extent, also acts on hypoxanthine. In Nitratidesulfovibrio vulgaris (strain ATCC 29579 / DSM 644 / CCUG 34227 / NCIMB 8303 / VKM B-1760 / Hildenborough) (Desulfovibrio vulgaris), this protein is Xanthine-guanine phosphoribosyltransferase.